We begin with the raw amino-acid sequence, 121 residues long: MLTKKEQRLRRARQTRIRIATQGVARLTVNRTNLHIYASVISGDGVKVLASASTAEAEVRKALGGSGKGGNVAAAQAIGKRLAEKAKAVGVEKVAFDRAGFAYHGRVKALADAAREAGLQF.

It belongs to the universal ribosomal protein uL18 family. Part of the 50S ribosomal subunit; part of the 5S rRNA/L5/L18/L25 subcomplex. Contacts the 5S and 23S rRNAs.

In terms of biological role, this is one of the proteins that bind and probably mediate the attachment of the 5S RNA into the large ribosomal subunit, where it forms part of the central protuberance. The polypeptide is Large ribosomal subunit protein uL18 (Albidiferax ferrireducens (strain ATCC BAA-621 / DSM 15236 / T118) (Rhodoferax ferrireducens)).